A 1246-amino-acid polypeptide reads, in one-letter code: HMG2-induced ER-remodeling protein 1 (1246 aa).

3 disordered regions span residues 19–241 (KGKR…GSLT), 263–288 (HHIQSHHSSGREQDSPHSESSDLPPI), and 816–836 (MPDASKISDSTDEPDKSKDEK). Residues 27-41 (KSAASTRTSEATTTS) are compositionally biased toward low complexity. The span at 58 to 95 (TIASPQRPLSGQNVNNELSNSKPAVSAEKVSQQGQVPT) shows a compositional bias: polar residues. Phosphoserine is present on Ser-102. Thr-128 is modified (phosphothreonine). 2 stretches are compositionally biased toward low complexity: residues 154-163 (RSSSISTSLN) and 211-230 (SKISTPTSTPTTASSKPSSS). Residues 271 to 282 (SGREQDSPHSES) are compositionally biased toward basic and acidic residues. Position 277 is a phosphoserine (Ser-277). Position 1013 is a phosphoserine (Ser-1013). Composition is skewed to polar residues over residues 1109-1133 (SSRHNSGLPSSANSSRISGSLTPDS) and 1200-1215 (SRSPSNDSLQESQQKA). Disordered stretches follow at residues 1109–1157 (SSRH…LPKI) and 1192–1224 (SLYGDELNSRSPSNDSLQESQQKAPLQRPLVED). Thr-1130 is modified (phosphothreonine). Phosphoserine is present on residues Ser-1200, Ser-1204, and Ser-1207.

Belongs to the GIP3/HER1 family. In terms of assembly, may interact with ribosomes.

It is found in the cytoplasm. Functionally, required for HMG2-induced endoplasmic reticulum-remodeling. The chain is HMG2-induced ER-remodeling protein 1 (HER1) from Saccharomyces cerevisiae (strain ATCC 204508 / S288c) (Baker's yeast).